Here is a 1051-residue protein sequence, read N- to C-terminus: Ubiquitin-activating enzyme E1 1 (1051 aa).

2 tandem repeats follow at residues 56–194 (GRET…GSVF) and 453–605 (GSKL…QMVI). A 2 approximate repeats region spans residues 56–605 (GRETMKRLFG…GAKCNTQMVI (550 aa)). ATP is bound by residues Ala472, Asp498, Arg509, Lys522, and 570 to 571 (DN). Cys626 functions as the Glycyl thioester intermediate in the catalytic mechanism.

This sequence belongs to the ubiquitin-activating E1 family. Monomer. Post-translationally, the N-terminus is blocked.

It carries out the reaction ATP + ubiquitin + [E1 ubiquitin-activating enzyme]-L-cysteine = AMP + diphosphate + S-ubiquitinyl-[E1 ubiquitin-activating enzyme]-L-cysteine.. Its pathway is protein modification; protein ubiquitination. Functionally, activates ubiquitin by first adenylating its C-terminal glycine residue with ATP, and thereafter linking this residue to the side chain of a cysteine residue in E1, yielding a ubiquitin-E1 thioester and free AMP. The protein is Ubiquitin-activating enzyme E1 1 of Triticum aestivum (Wheat).